Here is a 187-residue protein sequence, read N- to C-terminus: ATP synthase subunit b 2 (187 aa).

Residues 1–25 (MAESHGGAKGPAAGAHTGAEGGHGG) form a disordered region. The chain crosses the membrane as a helical span at residues 39–59 (LVSLAIFFVVLYVIVSKLALP). The interval 103–122 (RAQAIGNESRDKANAQAETE) is disordered. Positions 110-122 (ESRDKANAQAETE) are enriched in basic and acidic residues.

This sequence belongs to the ATPase B chain family. F-type ATPases have 2 components, F(1) - the catalytic core - and F(0) - the membrane proton channel. F(1) has five subunits: alpha(3), beta(3), gamma(1), delta(1), epsilon(1). F(0) has three main subunits: a(1), b(2) and c(10-14). The alpha and beta chains form an alternating ring which encloses part of the gamma chain. F(1) is attached to F(0) by a central stalk formed by the gamma and epsilon chains, while a peripheral stalk is formed by the delta and b chains.

It is found in the cell inner membrane. In terms of biological role, f(1)F(0) ATP synthase produces ATP from ADP in the presence of a proton or sodium gradient. F-type ATPases consist of two structural domains, F(1) containing the extramembraneous catalytic core and F(0) containing the membrane proton channel, linked together by a central stalk and a peripheral stalk. During catalysis, ATP synthesis in the catalytic domain of F(1) is coupled via a rotary mechanism of the central stalk subunits to proton translocation. Its function is as follows. Component of the F(0) channel, it forms part of the peripheral stalk, linking F(1) to F(0). The b'-subunit is a diverged and duplicated form of b found in plants and photosynthetic bacteria. This is ATP synthase subunit b 2 (atpF2) from Bradyrhizobium diazoefficiens (strain JCM 10833 / BCRC 13528 / IAM 13628 / NBRC 14792 / USDA 110).